A 637-amino-acid chain; its full sequence is Poly(A) polymerase beta (637 aa).

Residues 1–10 (MMPFPVTTQG) are compositionally biased toward low complexity. Positions 1–23 (MMPFPVTTQGPPQPAPPPNRYGV) are disordered. Residues 101–103 (FGS), T110, 114–116 (DID), D168, K229, Y238, and 247–248 (GV) each bind ATP. Residues D114, D116, and D168 each coordinate Mg(2+). The disordered stretch occupies residues 535–555 (SVPSSTSTMKTGPLISSSQGR).

It belongs to the poly(A) polymerase family. As to quaternary structure, interacts with GSG1. Mg(2+) serves as cofactor. It depends on Mn(2+) as a cofactor. Testis specific.

It is found in the nucleus. It catalyses the reaction RNA(n) + ATP = RNA(n)-3'-adenine ribonucleotide + diphosphate. This Homo sapiens (Human) protein is Poly(A) polymerase beta.